A 677-amino-acid chain; its full sequence is Pescadillo homolog (677 aa).

Positions 359 to 468 constitute a BRCT domain; sequence TFYISREAPK…KLLRPDLYAP (110 aa). Positions 472–677 are disordered; it reads LPPHLSPWVN…RKIEKGAAGK (206 aa). Acidic residues-rich tracts occupy residues 495–518, 529–538, and 545–581; these read EQEE…EEAG, ESEDSEDESV, and AETD…DEEE. A compositionally biased stretch (basic and acidic residues) spans 582-592; the sequence is TARTQHQKELE. Positions 609–650 form a coiled coil; the sequence is AAAKKKSQAKKRAAKKRQEEEELERQKMMMSRKKRKLLEKMM. The span at 612-623 shows a compositional bias: basic residues; that stretch reads KKKSQAKKRAAK. The segment covering 624 to 635 has biased composition (basic and acidic residues); it reads KRQEEEELERQK.

It belongs to the pescadillo family. As to quaternary structure, component of the NOP7 complex, composed of erb1, nop7 and ytm1. The complex is held together by erb1, which interacts with nop7 via its N-terminal domain and with ytm1 via a high-affinity interaction between the seven-bladed beta-propeller domains of the 2 proteins. The NOP7 complex associates with the 66S pre-ribosome.

The protein localises to the nucleus. The protein resides in the nucleolus. It is found in the nucleoplasm. Functionally, component of the NOP7 complex, which is required for maturation of the 25S and 5.8S ribosomal RNAs and formation of the 60S ribosome. This Emericella nidulans (strain FGSC A4 / ATCC 38163 / CBS 112.46 / NRRL 194 / M139) (Aspergillus nidulans) protein is Pescadillo homolog (nop7).